The primary structure comprises 177 residues: MNKIKQIIIVEGKTDTDKLKSIYGNDLKTIQTKGLSLNKKTLEMIEEFNNKMGVIIFTDPDGAGKKIRQTIIDYLDNKVLNAFIKKDDINKTSKKIGIAEASDDAIKKALDNLIIYDKNNVSLSWTDYINNDFYLKSNRIVICKYFNFDNNISSKTLFKWLNWMNVSIDDIKKIIGE.

The 95-residue stretch at 5–99 (KQIIIVEGKT…NKTSKKIGIA (95 aa)) folds into the Toprim domain. Residues glutamate 11, aspartate 59, and aspartate 61 each contribute to the Mg(2+) site.

This sequence belongs to the ribonuclease M5 family. The cofactor is Mg(2+).

Its subcellular location is the cytoplasm. The catalysed reaction is Endonucleolytic cleavage of RNA, removing 21 and 42 nucleotides, respectively, from the 5'- and 3'-termini of a 5S-rRNA precursor.. In terms of biological role, required for correct processing of both the 5' and 3' ends of 5S rRNA precursor. Cleaves both sides of a double-stranded region yielding mature 5S rRNA in one step. The protein is Ribonuclease M5 of Mycoplasma mycoides subsp. mycoides SC (strain CCUG 32753 / NCTC 10114 / PG1).